Reading from the N-terminus, the 37-residue chain is Conotoxin r11e (37 aa).

4 cysteine pairs are disulfide-bonded: C2–C16, C9–C21, C15–C26, and C20–C33. 4-carboxyglutamate occurs at positions 13 and 14. Position 34 is a 6'-bromotryptophan (W34).

Expressed by the venom duct.

The protein localises to the secreted. Causes hyperactivity, circular motion, convulsion, urination and death, when injected into 13- to 15-day-old mice. Causes gasping, backward swimming or swimming in a vertical direction and death, when intraperitoneally injected into goldfish. In Conus radiatus (Rayed cone), this protein is Conotoxin r11e.